The primary structure comprises 336 residues: MARVYADVNQNMPRAYWDYDSVNISWGVLENYEVVRKIGRGKYSEVFEGINVVNYQKCVIKVLKPVKKKKIKREIKILQNLAGGPNIVALLDVVRDSQSKTPSLIFEYVNNTEFRTLYPRFNDFDVRYYIFELLKALDFCHSKGIMHRDVKPHNVMIDHENRKLRLIDWGLAEFYHPGTEYNVRVASRYFKGPELLVDFQEYDYSLDMWSLGAMFASMIFRKEPFFHGQSNSDQLVKIAKVLGTDELFDYLDKYEIELDAQYDDILGRFQRKPWHSFINAENQRFVSNEAIDFLDKLLRYDHNERLTAKEAMAHPYFAPVRDEATRARYLAGETIN.

The region spanning 32–317 is the Protein kinase domain; the sequence is YEVVRKIGRG…AKEAMAHPYF (286 aa). Residues 38–46 and Lys-61 each bind ATP; that span reads IGRGKYSEV. The active-site Proton acceptor is the Asp-149.

The protein belongs to the protein kinase superfamily. Ser/Thr protein kinase family. CK2 subfamily. As to quaternary structure, tetramer composed of two alpha chains, one beta chain and one beta' chain.

It catalyses the reaction L-seryl-[protein] + ATP = O-phospho-L-seryl-[protein] + ADP + H(+). The enzyme catalyses L-threonyl-[protein] + ATP = O-phospho-L-threonyl-[protein] + ADP + H(+). Functionally, catalytic subunit of a constitutively active serine/threonine-protein kinase complex that phosphorylates a large number of substrates containing acidic residues C-terminal to the phosphorylated serine or threonine. Phosphorylates the frq clock protein thus regulating the circadian clock. The protein is Casein kinase II subunit alpha (cka) of Neurospora crassa (strain ATCC 24698 / 74-OR23-1A / CBS 708.71 / DSM 1257 / FGSC 987).